The sequence spans 136 residues: Cyclase aurE (136 aa).

Belongs to the aurE cyclase family.

The protein operates within polyketide biosynthesis. Cyclase; part of the gene cluster that mediates the biosynthesis of aurovertins, fungal polyketides that exhibit potent inhibition of adenosine triphosphate synthase. Tha biosynthesis starts with the HR-PKS aurA that selects propionate as the starter unit; synthesizes a hexa-ene chain through the repeated functions of the KR and DH domains in the first six iterations; selectively introduces three alpha-methyl substitutions at C4, C6, and C16 using the S-adensylmethionine-dependent cMET; and shuts off KR and DH in the last three iterations to afford a 1,3,5-triketo portion that can undergo intramolecular cyclization to yield the alpha-pyrone intermediate. AurE may act as a cyclase and enhances the rate of pyrone formation and product release of aurA. The methyltransferase aurB then methylates the C17 hydroxyl group. C17 methylation is required to initiate epoxidation by the downstream monooxygenase aurC. The monooxygenase aurC and the epoxide hydrolase aurD can iteratively transform the terminal triene portion of the methylated precursor into the dioxabicyclo[3.2.1]octane scaffold of aurovertin E. Epoxidation modifications of the precursor occur in two separate steps; bis-epoxidation of the two terminal olefins takes place first, followed by another epoxidation that occurs at C7-C8 after tetrahydrofuran formation. The O-acyltransferase aurG converts aurovertin E to aurovertin A. This is Cyclase aurE from Calcarisporium arbuscula (Dendryphion arbuscula).